The following is an 883-amino-acid chain: Alanine--tRNA ligase (883 aa).

Residues H565, H569, C675, and H679 each coordinate Zn(2+).

It belongs to the class-II aminoacyl-tRNA synthetase family. Requires Zn(2+) as cofactor.

It is found in the cytoplasm. The enzyme catalyses tRNA(Ala) + L-alanine + ATP = L-alanyl-tRNA(Ala) + AMP + diphosphate. Functionally, catalyzes the attachment of alanine to tRNA(Ala) in a two-step reaction: alanine is first activated by ATP to form Ala-AMP and then transferred to the acceptor end of tRNA(Ala). Also edits incorrectly charged Ser-tRNA(Ala) and Gly-tRNA(Ala) via its editing domain. This Rhodospirillum rubrum (strain ATCC 11170 / ATH 1.1.1 / DSM 467 / LMG 4362 / NCIMB 8255 / S1) protein is Alanine--tRNA ligase.